We begin with the raw amino-acid sequence, 95 residues long: Small ribosomal subunit protein bS18 (95 aa).

The protein belongs to the bacterial ribosomal protein bS18 family. Part of the 30S ribosomal subunit. Forms a tight heterodimer with protein bS6.

In terms of biological role, binds as a heterodimer with protein bS6 to the central domain of the 16S rRNA, where it helps stabilize the platform of the 30S subunit. The protein is Small ribosomal subunit protein bS18 of Rickettsia massiliae (strain Mtu5).